The primary structure comprises 347 residues: UDP-N-acetylenolpyruvoylglucosamine reductase (347 aa).

Residues 24–195 (FDARARVAAR…VAVTFRLPKA (172 aa)) enclose the FAD-binding PCMH-type domain. R171 is a catalytic residue. Residue S247 is the Proton donor of the active site. E343 is a catalytic residue.

The protein belongs to the MurB family. Requires FAD as cofactor.

Its subcellular location is the cytoplasm. It catalyses the reaction UDP-N-acetyl-alpha-D-muramate + NADP(+) = UDP-N-acetyl-3-O-(1-carboxyvinyl)-alpha-D-glucosamine + NADPH + H(+). The protein operates within cell wall biogenesis; peptidoglycan biosynthesis. In terms of biological role, cell wall formation. This is UDP-N-acetylenolpyruvoylglucosamine reductase from Burkholderia mallei (strain NCTC 10247).